A 669-amino-acid polypeptide reads, in one-letter code: RNA-binding protein 14 (669 aa).

2 RRM domains span residues 1–73 (MKIF…MSRP) and 79–149 (WKIF…LSTK). Glycyl lysine isopeptide (Lys-Gly) (interchain with G-Cter in SUMO2) cross-links involve residues lysine 126, lysine 135, lysine 138, lysine 149, and lysine 153. Disordered stretches follow at residues 147–175 (STKGQKKGPGLAVQSGDKTKKPGAGDTAF) and 193–232 (NSTGGFDGQARQPTPPFFGRDRSPLRRSPPRASYVAPLTA). Position 161 is a phosphoserine (serine 161). An N6-acetyllysine; alternate modification is found at lysine 164. Lysine 164 is covalently cross-linked (Glycyl lysine isopeptide (Lys-Gly) (interchain with G-Cter in SUMO2); alternate). Position 206 is a phosphothreonine (threonine 206). Phosphoserine is present on residues serine 220, serine 242, serine 244, serine 256, serine 272, and serine 280. A disordered region spans residues 284-303 (PYRGQLASPSSQSAAASSLG). Residues 287–303 (GQLASPSSQSAAASSLG) show a composition bias toward low complexity. The TRBP-interacting domain; interaction with STIL stretch occupies residues 307 to 354 (GAQPSASALSSYGGQAAAASSLNSYGAQGSSLASYGNQPSSYGAQAAS). Serine 520, serine 523, serine 527, and serine 562 each carry phosphoserine. Residues 566-592 (VANANSTPPPYERTRLSPPRASYDDPY) are disordered. A Phosphothreonine modification is found at threonine 572. Position 582 is a phosphoserine (serine 582). Residue lysine 600 forms a Glycyl lysine isopeptide (Lys-Gly) (interchain with G-Cter in SUMO2) linkage. 6 positions are modified to phosphoserine: serine 618, serine 620, serine 623, serine 627, serine 643, and serine 649.

As to quaternary structure, interacts with NCOA6, CITED1 and XRCC5/KU86. Interacts with SS18. Interacts with STIL and interferes with its interaction with CPAP. Interacts with gamma-tubulin. Part of the HDP-RNP complex composed of at least HEXIM1, PRKDC, XRCC5, XRCC6, paraspeckle proteins (SFPQ, NONO, PSPC1, RBM14, and MATR3) and NEAT1 RNA.

It localises to the nucleus. The protein localises to the nucleolus. The protein resides in the cytoplasm. In terms of biological role, may function as a nuclear receptor coactivator, enhancing transcription through other coactivators such as NCOA6 and CITED1. Regulates centriole biogenesis by suppressing the formation of aberrant centriolar protein complexes in the cytoplasm and thus preserving mitotic spindle integrity. Prevents the formation of the STIL-CPAP complex (which can induce the formation of aberrant centriolar protein complexes) by interfering with the interaction of STIL with CPAP. Plays a role in the regulation of DNA virus-mediated innate immune response by assembling into the HDP-RNP complex, a complex that serves as a platform for IRF3 phosphorylation and subsequent innate immune response activation through the cGAS-STING pathway. This Pongo abelii (Sumatran orangutan) protein is RNA-binding protein 14 (RBM14).